The primary structure comprises 442 residues: tRNA modification GTPase MnmE (442 aa).

Positions 22, 79, and 118 each coordinate (6S)-5-formyl-5,6,7,8-tetrahydrofolate. A TrmE-type G domain is found at 215 to 365 (EIPIAIVGRP…LEKAILFEYQ (151 aa)). Position 225 (Asn-225) interacts with K(+). Residues 225 to 230 (NVGKSS), 244 to 250 (TNIEGTT), and 269 to 272 (DTAG) contribute to the GTP site. A Mg(2+)-binding site is contributed by Ser-229. 3 residues coordinate K(+): Thr-244, Ile-246, and Thr-249. Thr-250 is a Mg(2+) binding site. A (6S)-5-formyl-5,6,7,8-tetrahydrofolate-binding site is contributed by Lys-442.

This sequence belongs to the TRAFAC class TrmE-Era-EngA-EngB-Septin-like GTPase superfamily. TrmE GTPase family. In terms of assembly, homodimer. Heterotetramer of two MnmE and two MnmG subunits. Requires K(+) as cofactor.

It localises to the cytoplasm. Exhibits a very high intrinsic GTPase hydrolysis rate. Involved in the addition of a carboxymethylaminomethyl (cmnm) group at the wobble position (U34) of certain tRNAs, forming tRNA-cmnm(5)s(2)U34. This Mycoplasmopsis pulmonis (strain UAB CTIP) (Mycoplasma pulmonis) protein is tRNA modification GTPase MnmE.